The following is a 220-amino-acid chain: Ribose-5-phosphate isomerase A (220 aa).

Residues 28–31 (TGST), 81–84 (DGAD), and 94–97 (KGGG) each bind substrate. E103 (proton acceptor) is an active-site residue. K121 is a substrate binding site.

It belongs to the ribose 5-phosphate isomerase family. As to quaternary structure, homodimer.

It carries out the reaction aldehydo-D-ribose 5-phosphate = D-ribulose 5-phosphate. The protein operates within carbohydrate degradation; pentose phosphate pathway; D-ribose 5-phosphate from D-ribulose 5-phosphate (non-oxidative stage): step 1/1. In terms of biological role, catalyzes the reversible conversion of ribose-5-phosphate to ribulose 5-phosphate. This chain is Ribose-5-phosphate isomerase A, found in Vesicomyosocius okutanii subsp. Calyptogena okutanii (strain HA).